A 570-amino-acid polypeptide reads, in one-letter code: Proline--tRNA ligase (570 aa).

Belongs to the class-II aminoacyl-tRNA synthetase family. ProS type 1 subfamily. In terms of assembly, homodimer.

The protein localises to the cytoplasm. The enzyme catalyses tRNA(Pro) + L-proline + ATP = L-prolyl-tRNA(Pro) + AMP + diphosphate. Its function is as follows. Catalyzes the attachment of proline to tRNA(Pro) in a two-step reaction: proline is first activated by ATP to form Pro-AMP and then transferred to the acceptor end of tRNA(Pro). As ProRS can inadvertently accommodate and process non-cognate amino acids such as alanine and cysteine, to avoid such errors it has two additional distinct editing activities against alanine. One activity is designated as 'pretransfer' editing and involves the tRNA(Pro)-independent hydrolysis of activated Ala-AMP. The other activity is designated 'posttransfer' editing and involves deacylation of mischarged Ala-tRNA(Pro). The misacylated Cys-tRNA(Pro) is not edited by ProRS. In Desulfotalea psychrophila (strain LSv54 / DSM 12343), this protein is Proline--tRNA ligase.